Consider the following 149-residue polypeptide: Large ribosomal subunit protein bL9 (149 aa).

Belongs to the bacterial ribosomal protein bL9 family.

Functionally, binds to the 23S rRNA. The chain is Large ribosomal subunit protein bL9 from Bacillus velezensis (strain DSM 23117 / BGSC 10A6 / LMG 26770 / FZB42) (Bacillus amyloliquefaciens subsp. plantarum).